A 173-amino-acid chain; its full sequence is Inorganic pyrophosphatase (173 aa).

3 residues coordinate substrate: Lys-29, Arg-43, and Tyr-55. Mg(2+) is bound by residues Asp-65, Asp-70, and Asp-102. Tyr-141 contributes to the substrate binding site.

The protein belongs to the PPase family. As to quaternary structure, homohexamer. The cofactor is Mg(2+).

The protein resides in the cytoplasm. It carries out the reaction diphosphate + H2O = 2 phosphate + H(+). Functionally, catalyzes the hydrolysis of inorganic pyrophosphate (PPi) forming two phosphate ions. The polypeptide is Inorganic pyrophosphatase (Rickettsia felis (strain ATCC VR-1525 / URRWXCal2) (Rickettsia azadi)).